Consider the following 220-residue polypeptide: Putative NAD(P)H nitroreductase SERP2086 (220 aa).

The protein belongs to the nitroreductase family. FMN serves as cofactor.

This chain is Putative NAD(P)H nitroreductase SERP2086, found in Staphylococcus epidermidis (strain ATCC 35984 / DSM 28319 / BCRC 17069 / CCUG 31568 / BM 3577 / RP62A).